The chain runs to 199 residues: MQYPEPIAKLIDSFMKLPGIGYKTATRLAFFTLDMEKDDVTEFAKALISAQRDLSFCSICGNITEDDPCDICQDPSRDQKAVLVVEDSKDVMSMEQMKEYHGLYHVLHGVLSPMDGKGPEDINIAALLTRLQKNEAIKEVIIATNATPEGEATAMYISRLVKPSGIKVTRLAHGLSVGSDIEYADQMTLYKAVEGRTEM.

A C4-type zinc finger spans residues 57–72 (CSICGNITEDDPCDIC). Residues 80–176 (KAVLVVEDSK…KVTRLAHGLS (97 aa)) enclose the Toprim domain.

This sequence belongs to the RecR family.

Functionally, may play a role in DNA repair. It seems to be involved in an RecBC-independent recombinational process of DNA repair. It may act with RecF and RecO. The chain is Recombination protein RecR from Pediococcus pentosaceus (strain ATCC 25745 / CCUG 21536 / LMG 10740 / 183-1w).